Reading from the N-terminus, the 428-residue chain is Enolase (428 aa).

Glutamine 162 contacts (2R)-2-phosphoglycerate. Glutamate 204 functions as the Proton donor in the catalytic mechanism. 3 residues coordinate Mg(2+): aspartate 241, glutamate 283, and aspartate 310. Residues lysine 335, arginine 364, serine 365, and lysine 386 each contribute to the (2R)-2-phosphoglycerate site. Lysine 335 (proton acceptor) is an active-site residue.

Belongs to the enolase family. Mg(2+) serves as cofactor.

The protein resides in the cytoplasm. The protein localises to the secreted. Its subcellular location is the cell surface. It carries out the reaction (2R)-2-phosphoglycerate = phosphoenolpyruvate + H2O. The protein operates within carbohydrate degradation; glycolysis; pyruvate from D-glyceraldehyde 3-phosphate: step 4/5. Catalyzes the reversible conversion of 2-phosphoglycerate (2-PG) into phosphoenolpyruvate (PEP). It is essential for the degradation of carbohydrates via glycolysis. This is Enolase from Rhodococcus jostii (strain RHA1).